The following is a 352-amino-acid chain: C-C chemokine receptor type 5 (352 aa).

Over 1–30 the chain is Extracellular; it reads MDYQVSSPTYDIDYYTSEPCQKVNVKQIAA. Tyr-3 carries the sulfotyrosine modification. O-linked (GalNAc...) serine glycosylation is found at Ser-6 and Ser-7. Sulfotyrosine occurs at positions 10, 14, and 15. Cystine bridges form between Cys-20–Cys-269 and Cys-101–Cys-178. A helical membrane pass occupies residues 31–58; sequence RLLPPLYSLVFIFGFVGNILVVLILINC. Residues 59–68 are Cytoplasmic-facing; that stretch reads KRLKSMTDIY. A helical membrane pass occupies residues 69-89; sequence LLNLAISDLFFLLTVPFWAHY. The Extracellular segment spans residues 90–102; it reads AAAQWDFGNTMCQ. The helical transmembrane segment at 103-124 threads the bilayer; the sequence is LLTGLYFIGFFSGIFFIILLTI. Residues 125-141 lie on the Cytoplasmic side of the membrane; sequence DRYLAIVHAVFALKART. Residues 142–166 traverse the membrane as a helical segment; the sequence is VTFGVVTSVITWVVAVFASLPGIIF. The Extracellular segment spans residues 167 to 198; sequence TRSQREGLHYTCSSHFPYSQYQFWKNFQTLKI. The chain crosses the membrane as a helical span at residues 199–218; sequence VILGLVLPLLVMVICYSGIL. Over 219 to 235 the chain is Cytoplasmic; the sequence is KTLLRCRNEKKRHRAVR. The helical transmembrane segment at 236 to 260 threads the bilayer; it reads LIFTIMIVYFLFWAPYNIVLLLNTF. Residues 261 to 277 lie on the Extracellular side of the membrane; the sequence is QEFFGLNNCSSSNRLDQ. The chain crosses the membrane as a helical span at residues 278 to 301; it reads AMQVTETLGMTHCCINPIIYAFVG. The Cytoplasmic segment spans residues 302–352; sequence EKFRNYLLVFFQKHIAKRFCKCCSIFQQEAPERASSVYTRSTGEQEISVGL. 3 S-palmitoyl cysteine lipidation sites follow: Cys-321, Cys-323, and Cys-324. Residues Ser-336, Ser-337, Ser-342, and Ser-349 each carry the phosphoserine; by BARK1 modification.

It belongs to the G-protein coupled receptor 1 family. In terms of assembly, interacts with PRAF2. Efficient ligand binding to CCL3/MIP-1alpha and CCL4/MIP-1beta requires sulfation, O-glycosylation and sialic acid modifications. Glycosylation on Ser-6 is required for efficient binding of CCL4. Interacts with GRK2. Interacts with ARRB1 and ARRB2. Interacts with CNIH4. Interacts with S100A4; this interaction stimulates T-lymphocyte chemotaxis. In terms of processing, sulfated on at least 2 of the N-terminal tyrosines. Sulfation is required for efficient binding of the chemokines, CCL3 and CCL4. Post-translationally, palmitoylation in the C-terminal is important for cell surface expression. Phosphorylation on serine residues in the C-terminal is stimulated by binding CC chemokines especially by APO-RANTES. In terms of processing, O-glycosylated, but not N-glycosylated. Ser-6 appears to be the major site even if Ser-7 may be also O-glycosylated. Also sialylated glycans present which contribute to chemokine binding. Thr-16 and Ser-17 may also be glycosylated and, if so, with small moieties such as a T-antigen.

It localises to the cell membrane. Its function is as follows. Receptor for a number of inflammatory CC-chemokines including CCL3/MIP-1-alpha, CCL4/MIP-1-beta and RANTES and subsequently transduces a signal by increasing the intracellular calcium ion level. May play a role in the control of granulocytic lineage proliferation or differentiation. Participates in T-lymphocyte migration to the infection site by acting as a chemotactic receptor. The sequence is that of C-C chemokine receptor type 5 (CCR5) from Semnopithecus entellus (Northern plains gray langur).